Reading from the N-terminus, the 456-residue chain is Glycosyl hydrolase family 109 protein 2 (456 aa).

A signal peptide (tat-type signal) is located at residues 1-33; sequence MSGFDRRSFLKASMVTAAATALAACASSERATG. Residues 63–64, Asp-85, 134–137, 154–155, and Asn-183 each bind NAD(+); these read ER, WAWH, and EV. Substrate-binding positions include Tyr-212, Arg-231, 243–246, and Tyr-325; that span reads YPTH. Tyr-243 is an NAD(+) binding site.

It belongs to the Gfo/Idh/MocA family. Glycosyl hydrolase 109 subfamily. The cofactor is NAD(+). In terms of processing, predicted to be exported by the Tat system. The position of the signal peptide cleavage has not been experimentally proven.

In terms of biological role, glycosidase. The protein is Glycosyl hydrolase family 109 protein 2 of Shewanella sp. (strain ANA-3).